A 125-amino-acid chain; its full sequence is Antitoxin MazE5 (125 aa).

In terms of assembly, forms a complex with cognate toxin MazF5.

In terms of biological role, antitoxin component of a type II toxin-antitoxin (TA) system. Upon expression in M.smegmatis neutralizes the effect of cognate toxin MazF5. The sequence is that of Antitoxin MazE5 (mazE5) from Mycobacterium tuberculosis (strain ATCC 25618 / H37Rv).